The sequence spans 994 residues: Glutamate [NMDA] receptor subunit 1 (994 aa).

Residues 1-23 form the signal peptide; that stretch reads MAADGFVYRWLLFGTTIVLLAEA. Topologically, residues 24–570 are extracellular; sequence AQRHTASDNP…TLVSFLQPFS (547 aa). N-linked (GlcNAc...) asparagine glycosylation is found at Asn255, Asn311, Asn342, Asn394, Asn451, Asn478, and Asn498. Glycine-binding positions include 527–529 and Arg534; that span reads PLT. Residues 571-591 form a helical membrane-spanning segment; the sequence is NTLWILVMVSVHVVALVLYLL. The Cytoplasmic portion of the chain corresponds to 592-648; it reads DRFSPFGRFKLSHSDSNEEKALNLSSAVWFAWGVLLNSGIGEGTPRSFSARVLGMVW. Residues 649–669 traverse the membrane as a helical segment; it reads AGFAMIIVASYTANLAAFLVL. Residues 670–828 lie on the Extracellular side of the membrane; sequence ERPKTKLSGI…KTPNTLGLKN (159 aa). N-linked (GlcNAc...) asparagine glycosylation occurs at Asn690. Glycine-binding residues include Ser700 and Asp744. Residues 829–849 traverse the membrane as a helical segment; sequence MAGVFILVGVGIAGGVGLIII. Over 850-994 the chain is Cytoplasmic; the sequence is EVIYKKHQVK…YTSDVSHLVV (145 aa). Positions 971 to 994 are disordered; the sequence is RPQQNMLPPRYSPGYTSDVSHLVV. Polar residues predominate over residues 984 to 994; that stretch reads GYTSDVSHLVV.

It belongs to the glutamate-gated ion channel (TC 1.A.10.1) family. Forms a heteromeric NMDA channel with Nmdar2.

It localises to the cell membrane. Its subcellular location is the postsynaptic cell membrane. It is found in the postsynaptic density. In terms of biological role, NMDA receptor subtype of glutamate-gated ion channels with high calcium permeability and voltage-dependent sensitivity to magnesium. Mediated by glycine. This protein plays a key role in synaptic plasticity, synaptogenesis, excitotoxicity, memory acquisition and learning. It mediates neuronal functions in glutamate neurotransmission. Is involved in the cell surface targeting of NMDA receptors. Plays a role in associative learning and in long-term memory consolidation. The protein is Glutamate [NMDA] receptor subunit 1 of Drosophila ananassae (Fruit fly).